We begin with the raw amino-acid sequence, 175 residues long: CDP-archaeol synthase (175 aa).

The next 4 membrane-spanning stretches (helical) occupy residues G41 to M61, Y78 to F98, F122 to F142, and V150 to V170.

This sequence belongs to the CDP-archaeol synthase family. The cofactor is Mg(2+).

It is found in the cell membrane. It carries out the reaction 2,3-bis-O-(geranylgeranyl)-sn-glycerol 1-phosphate + CTP + H(+) = CDP-2,3-bis-O-(geranylgeranyl)-sn-glycerol + diphosphate. The protein operates within membrane lipid metabolism; glycerophospholipid metabolism. In terms of biological role, catalyzes the formation of CDP-2,3-bis-(O-geranylgeranyl)-sn-glycerol (CDP-archaeol) from 2,3-bis-(O-geranylgeranyl)-sn-glycerol 1-phosphate (DGGGP) and CTP. This reaction is the third ether-bond-formation step in the biosynthesis of archaeal membrane lipids. The protein is CDP-archaeol synthase of Methanosarcina acetivorans (strain ATCC 35395 / DSM 2834 / JCM 12185 / C2A).